The following is a 241-amino-acid chain: General transcription factor IIF subunit 2 (241 aa).

It belongs to the TFIIF beta subunit family. Heterodimer of an alpha and a beta subunit.

It localises to the nucleus. In terms of biological role, TFIIF is a general transcription initiation factor that binds to RNA polymerase II and helps to recruit it to the initiation complex in collaboration with TFIIB. This Dictyostelium discoideum (Social amoeba) protein is General transcription factor IIF subunit 2 (gtf2f2).